We begin with the raw amino-acid sequence, 184 residues long: UPS-like protein C36.10 (184 aa).

In terms of domain architecture, PRELI/MSF1 spans 1–172 (MKIFESCHLF…VLEKINMSVF (172 aa)).

This sequence belongs to the slowmo family.

It localises to the cytoplasm. Its subcellular location is the mitochondrion inner membrane. The protein localises to the mitochondrion intermembrane space. Required for mitochondrial morphology. May control phospholipid metabolism in the mitochondrial intermembrane space. The sequence is that of UPS-like protein C36.10 from Schizosaccharomyces pombe (strain 972 / ATCC 24843) (Fission yeast).